The primary structure comprises 76 residues: UPF0291 protein BCE_1981 (76 aa).

This sequence belongs to the UPF0291 family.

The protein resides in the cytoplasm. This is UPF0291 protein BCE_1981 from Bacillus cereus (strain ATCC 10987 / NRS 248).